The chain runs to 428 residues: Adenylosuccinate synthetase (428 aa).

Residues 11 to 17 (GDEGKGK) and 39 to 41 (GHT) each bind GTP. Aspartate 12 serves as the catalytic Proton acceptor. Residues aspartate 12 and glycine 39 each coordinate Mg(2+). IMP contacts are provided by residues 12–15 (DEGK), 37–40 (NAGH), threonine 130, arginine 144, asparagine 226, threonine 241, and arginine 305. Catalysis depends on histidine 40, which acts as the Proton donor. 301–307 (VTTGRKR) contacts substrate. Residues arginine 307, 333–335 (KLD), and 415–417 (GTG) contribute to the GTP site.

It belongs to the adenylosuccinate synthetase family. Homodimer. Mg(2+) serves as cofactor.

The protein localises to the cytoplasm. It carries out the reaction IMP + L-aspartate + GTP = N(6)-(1,2-dicarboxyethyl)-AMP + GDP + phosphate + 2 H(+). The protein operates within purine metabolism; AMP biosynthesis via de novo pathway; AMP from IMP: step 1/2. Functionally, plays an important role in the de novo pathway and in the salvage pathway of purine nucleotide biosynthesis. Catalyzes the first committed step in the biosynthesis of AMP from IMP. This Komagataella phaffii (strain GS115 / ATCC 20864) (Yeast) protein is Adenylosuccinate synthetase.